Reading from the N-terminus, the 876-residue chain is MGPLGREAWAQRLGAFRASPSAFLAGAEGEDLGRDLLSDLRSEKLSEQTKVSLLTLSLEYSDKLWPDAPAAEAAATSLLDTLVLLPTRPSALRRLLLLAATTALVSGDALGPTSGASCRLLPLLLGLASGRDLGRSFGTPSEQRHLQATACECLGELERCKPGLLAGALGMLRSLPGQTGPIQPVSLLLALVLHDTLVVQSRSGAGLQGLLVAEDFSTGSCPWDWTLAEEWDAHLKPQGPSWPTAGEEERGFPVLEPSPEDARELKAAVAQLLDTSYLLTPVAQAQLLWLLGWALRGLRGQPPVLFKPQLVRLLGTAQLTLLHSVLSLKAAFGEALFTAQDEALLLRRLTLGAQHPALPSPTHLFYLHCILSFPENCPLGPEGEEAAPLLLGPQLCRGLMPSLLHDPTVLLARLHLLCLLCADDEEEEKDQTQGPQWFLQEVLAGLQQRAALDGGPRALATLCFQASYLVTNCLTRHSTVQTFLIRGLAQLYRARPSLAPHFVDLLDQVSPELREPLREVLLQEAVARPGESEALCWHLQMLAKVAEGATQSTTLSFLQAAAVHCTDWGLHQALLRVCRALLRTGGGDGLANLLQELARQLENADGRDHARLYYVLLSHLSSSKLGMALGPSLAAPALASSLMAENQGFSSALMVQETSAPIQLSVGPQQAKGPLPVLCLQVQALDAPVYSLELRFRVEGQLYEPLEAVHIPCLRPGQPAHPLYLLLQPRCPAPARLHVRALYSTSAGLTCHARLPPLSVNFADLFLPFPRLPKGSELRFFDELWNSCLPKGVESRVWCPLGQQGLEALVSQYLEPFVVLAQPPTTYLIAIRLPPASMLLLRLEKAQVDGVPVALRTDDWAVLPLVGDYLRGLAAH.

Probably part of the adaptor protein complex 5 (AP-5), a tetramer composed of AP5B1, AP5M1, AP5S1 and AP5Z1. Interacts with ZFYVE26 and SPG11.

As part of AP-5, a probable fifth adaptor protein complex it may be involved in endosomal transport. The chain is AP-5 complex subunit beta-1 (Ap5b1) from Mus musculus (Mouse).